The sequence spans 216 residues: Kynurenine formamidase (216 aa).

Substrate is bound at residue Phe-21. Zn(2+) is bound by residues His-51, His-55, and Asp-57. His-61 (proton donor/acceptor) is an active-site residue. The Zn(2+) site is built by His-167 and Glu-179.

The protein belongs to the Cyclase 1 superfamily. KynB family. In terms of assembly, homodimer. The cofactor is Zn(2+).

The catalysed reaction is N-formyl-L-kynurenine + H2O = L-kynurenine + formate + H(+). The protein operates within amino-acid degradation; L-tryptophan degradation via kynurenine pathway; L-kynurenine from L-tryptophan: step 2/2. Its function is as follows. Catalyzes the hydrolysis of N-formyl-L-kynurenine to L-kynurenine, the second step in the kynurenine pathway of tryptophan degradation. The sequence is that of Kynurenine formamidase from Paracidovorax citrulli (strain AAC00-1) (Acidovorax citrulli).